A 266-amino-acid chain; its full sequence is Phosphatidylserine decarboxylase proenzyme (266 aa).

Active-site charge relay system; for autoendoproteolytic cleavage activity residues include aspartate 74, histidine 135, and serine 237. Serine 237 (schiff-base intermediate with substrate; via pyruvic acid; for decarboxylase activity) is an active-site residue. A Pyruvic acid (Ser); by autocatalysis modification is found at serine 237.

Belongs to the phosphatidylserine decarboxylase family. PSD-B subfamily. Prokaryotic type I sub-subfamily. As to quaternary structure, heterodimer of a large membrane-associated beta subunit and a small pyruvoyl-containing alpha subunit. The cofactor is pyruvate. Is synthesized initially as an inactive proenzyme. Formation of the active enzyme involves a self-maturation process in which the active site pyruvoyl group is generated from an internal serine residue via an autocatalytic post-translational modification. Two non-identical subunits are generated from the proenzyme in this reaction, and the pyruvate is formed at the N-terminus of the alpha chain, which is derived from the carboxyl end of the proenzyme. The autoendoproteolytic cleavage occurs by a canonical serine protease mechanism, in which the side chain hydroxyl group of the serine supplies its oxygen atom to form the C-terminus of the beta chain, while the remainder of the serine residue undergoes an oxidative deamination to produce ammonia and the pyruvoyl prosthetic group on the alpha chain. During this reaction, the Ser that is part of the protease active site of the proenzyme becomes the pyruvoyl prosthetic group, which constitutes an essential element of the active site of the mature decarboxylase.

It is found in the cell membrane. It catalyses the reaction a 1,2-diacyl-sn-glycero-3-phospho-L-serine + H(+) = a 1,2-diacyl-sn-glycero-3-phosphoethanolamine + CO2. The protein operates within phospholipid metabolism; phosphatidylethanolamine biosynthesis; phosphatidylethanolamine from CDP-diacylglycerol: step 2/2. Functionally, catalyzes the formation of phosphatidylethanolamine (PtdEtn) from phosphatidylserine (PtdSer). This chain is Phosphatidylserine decarboxylase proenzyme, found in Campylobacter jejuni subsp. jejuni serotype O:2 (strain ATCC 700819 / NCTC 11168).